We begin with the raw amino-acid sequence, 234 residues long: Probable glycerol uptake facilitator protein (234 aa).

2 helical membrane-spanning segments follow: residues 3–23 and 36–56; these read VYLA…GVVA and GWIV…YLVG. Residues 64-66 carry the NPA 1 motif; the sequence is NPA. 3 consecutive transmembrane segments (helical) span residues 82-102, 134-154, and 164-184; these read VPGY…LVYL, LLTE…IGAN, and LVGF…GYAI. The short motif at 185 to 187 is the NPA 2 element; that stretch reads NPA. The helical transmembrane segment at 214-234 threads the bilayer; sequence VPIIGPIIGGILGASLYNWLF.

It belongs to the MIP/aquaporin (TC 1.A.8) family.

It localises to the cell membrane. The catalysed reaction is glycerol(in) = glycerol(out). Functionally, mediates glycerol diffusion across the cytoplasmic membrane via a pore-type mechanism. This is Probable glycerol uptake facilitator protein (glpF) from Thermotoga maritima (strain ATCC 43589 / DSM 3109 / JCM 10099 / NBRC 100826 / MSB8).